We begin with the raw amino-acid sequence, 327 residues long: PDZ and LIM domain protein 1 (327 aa).

At T2 the chain carries N-acetylthreonine. Residues 3 to 85 (TQQIVLQGPG…NMTLTVSRSE (83 aa)) form the PDZ domain. Phosphoserine occurs at positions 90 and 130. Y142 carries the phosphotyrosine modification. Residues 161-186 (VESKTSASGEEANSRPSAQPHPSGGL) form a disordered region. In terms of domain architecture, LIM zinc-binding spans 256-315 (PICDKCGTGIVGVFVKLRDHHRHPECYVCTDCGINLKQKGHFFVGDQIYCEKHARERVTP). C258, C261, H278, C281, C284, C287, C305, and H308 together coordinate Zn(2+). T314 carries the post-translational modification Phosphothreonine. Position 319 is a phosphotyrosine (Y319).

Interacts with ACTN1. Interacts with ACTN2 and ACTN4. Interacts with PDLIM4. Expressed most abundantly in heart, lung and liver, moderately in spleen and skeletal muscle, and at extremely low levels (if at all) in testis and brain tissues.

The protein localises to the cytoplasm. It localises to the cytoskeleton. Its subcellular location is the myofibril. It is found in the sarcomere. The protein resides in the z line. In terms of biological role, cytoskeletal protein that may act as an adapter that brings other proteins (like kinases) to the cytoskeleton. Involved in assembly, disassembly and directioning of stress fibers in fibroblasts. Required for the localization of ACTN1 and PALLD to stress fibers. Required for cell migration and in maintaining cell polarity of fibroblasts. The polypeptide is PDZ and LIM domain protein 1 (Pdlim1) (Rattus norvegicus (Rat)).